A 132-amino-acid chain; its full sequence is MARKEFRYRGYTLEQLMNMSLEELARLFPARQRRSLKRGLTPEQKKLLRKIRLAKKGKYKKPIRTHCRDMIILPEMVGLTIYVHNGKEFVPVEIKPEMIGHYLGEFAPTRKKVEHGAPGVGATRSSMFVAVK.

It belongs to the universal ribosomal protein uS19 family. In terms of assembly, part of the 30S ribosomal subunit.

Functionally, protein S19 forms a complex with S13 that binds strongly to the 16S ribosomal RNA. The sequence is that of Small ribosomal subunit protein uS19 from Pyrococcus furiosus (strain ATCC 43587 / DSM 3638 / JCM 8422 / Vc1).